The sequence spans 150 residues: 16 kDa phloem protein 1 (150 aa).

One can recognise a C2 domain in the interval 1–108; it reads MGMGMMEVHL…LAEGVRKGKS (108 aa). Residues aspartate 20, aspartate 27, aspartate 78, aspartate 80, and aspartate 86 each contribute to the Ca(2+) site.

The cofactor is Ca(2+). In terms of tissue distribution, sieve elements of leaves, stems, roots and flowers.

In terms of biological role, binds to both sense and antisense RNA. Interacts with mesophyll plasmodesmata to mediate its own cell-to-cell transport and potentiate RNA trafficking. The polypeptide is 16 kDa phloem protein 1 (PP16-1) (Cucurbita maxima (Pumpkin)).